A 173-amino-acid polypeptide reads, in one-letter code: MVSKWGAGSAFGLQGNGSNSSGLRPLLKRTAQINLRQTQDNAQTGKFSKYLNTAQALHQMGVIVPSLETWPGKPSTGIATRAVGGVSVQAATRLDFYKWRSAECNNKVIPHLHVPTRLLKWPDRCDGFKRGTEFVVLGCRGGPGIGSRNLMSPHRAQLGHRQAEAVCRKPVGF.

The protein belongs to the MgpC family.

The chain is Putative MgpC-like protein MPN_092 from Mycoplasma pneumoniae (strain ATCC 29342 / M129 / Subtype 1) (Mycoplasmoides pneumoniae).